Reading from the N-terminus, the 233-residue chain is Small ribosomal subunit protein uS2 (233 aa).

Belongs to the universal ribosomal protein uS2 family.

This is Small ribosomal subunit protein uS2 from Clostridium acetobutylicum (strain ATCC 824 / DSM 792 / JCM 1419 / IAM 19013 / LMG 5710 / NBRC 13948 / NRRL B-527 / VKM B-1787 / 2291 / W).